The primary structure comprises 178 residues: Ribosome maturation factor RimM (178 aa).

Positions E99–F178 constitute a PRC barrel domain.

This sequence belongs to the RimM family. In terms of assembly, binds ribosomal protein uS19.

The protein localises to the cytoplasm. An accessory protein needed during the final step in the assembly of 30S ribosomal subunit, possibly for assembly of the head region. Essential for efficient processing of 16S rRNA. May be needed both before and after RbfA during the maturation of 16S rRNA. It has affinity for free ribosomal 30S subunits but not for 70S ribosomes. The chain is Ribosome maturation factor RimM from Mannheimia succiniciproducens (strain KCTC 0769BP / MBEL55E).